The sequence spans 57 residues: Large ribosomal subunit protein bL32 (57 aa).

A compositionally biased stretch (basic residues) spans 1–19 (MAVPKRRMSRANTRSRRAQ). Positions 1–20 (MAVPKRRMSRANTRSRRAQW) are disordered.

It belongs to the bacterial ribosomal protein bL32 family.

The chain is Large ribosomal subunit protein bL32 from Mycolicibacterium smegmatis (strain ATCC 700084 / mc(2)155) (Mycobacterium smegmatis).